Here is a 373-residue protein sequence, read N- to C-terminus: Chorismate synthase (373 aa).

Arg-46 contributes to the NADP(+) binding site. Residues 123–125 (RSS), 251–252 (NA), Gly-295, 310–314 (KPTPS), and Arg-337 each bind FMN.

Belongs to the chorismate synthase family. FMNH2 serves as cofactor.

It catalyses the reaction 5-O-(1-carboxyvinyl)-3-phosphoshikimate = chorismate + phosphate. It participates in metabolic intermediate biosynthesis; chorismate biosynthesis; chorismate from D-erythrose 4-phosphate and phosphoenolpyruvate: step 7/7. Functionally, catalyzes the anti-1,4-elimination of the C-3 phosphate and the C-6 proR hydrogen from 5-enolpyruvylshikimate-3-phosphate (EPSP) to yield chorismate, which is the branch point compound that serves as the starting substrate for the three terminal pathways of aromatic amino acid biosynthesis. This reaction introduces a second double bond into the aromatic ring system. The chain is Chorismate synthase from Methanococcus maripaludis (strain DSM 14266 / JCM 13030 / NBRC 101832 / S2 / LL).